Here is an 868-residue protein sequence, read N- to C-terminus: Alanine--tRNA ligase (868 aa).

Residues histidine 555, histidine 559, cysteine 657, and histidine 661 each coordinate Zn(2+). Positions 828–847 are disordered; it reads SQVGGKGGGRPDMAQAGGSE.

Belongs to the class-II aminoacyl-tRNA synthetase family. It depends on Zn(2+) as a cofactor.

It is found in the cytoplasm. It carries out the reaction tRNA(Ala) + L-alanine + ATP = L-alanyl-tRNA(Ala) + AMP + diphosphate. Catalyzes the attachment of alanine to tRNA(Ala) in a two-step reaction: alanine is first activated by ATP to form Ala-AMP and then transferred to the acceptor end of tRNA(Ala). Also edits incorrectly charged Ser-tRNA(Ala) and Gly-tRNA(Ala) via its editing domain. The polypeptide is Alanine--tRNA ligase (Pseudoalteromonas translucida (strain TAC 125)).